A 1682-amino-acid polypeptide reads, in one-letter code: Calmodulin-binding transcription activator 1 (1682 aa).

Positions 63 to 188 (KCSSLPKERH…YLNVPAIEDC (126 aa)) form a DNA-binding region, CG-1. A Nuclear localization signal motif is present at residues 112–119 (RKKVKYRK). Disordered regions lie at residues 284–375 (RIIS…MVDS) and 599–622 (SSFSQTGHSPHIHQTPSPSFFLQD). The segment covering 302 to 327 (EVQHNDVSEGKHEPSHGRSTSREKRN) has biased composition (basic and acidic residues). Polar residues-rich tracts occupy residues 337 to 367 (HQNSTEVSSTNQVEVPDTTQSSPVSISSGLN) and 599 to 618 (SSFSQTGHSPHIHQTPSPSF). Positions 877-955 (DYSPEWSYPE…ISNSVVFEYK (79 aa)) constitute an IPT/TIG domain. The segment at 992–1020 (MAEMTGSQQHKQASGGGGSGSGSGSGAGG) is disordered. A compositionally biased stretch (gly residues) spans 1005–1020 (SGGGGSGSGSGSGAGG). ANK repeat units lie at residues 1066-1095 (RGMTLLHLAAAQGYATLIQTLIKWRTKHAD), 1111-1141 (FSCTPLMWACALGHLEAAVVLYKWDRRAISI), and 1145-1174 (LGRLPLGIARSRGHVKLAECLEHLQRDEQA). Disordered stretches follow at residues 1217-1249 (ASTNPELRRPRSEPSNYYSTEGHKDYPAPKKHK) and 1267-1318 (LSLE…SASQ). Positions 1268-1291 (SLEQPNIRKQSPRSKQPSPETISP) are enriched in polar residues. Positions 1308–1318 (ETAASQASASQ) are enriched in low complexity. 3 consecutive IQ domains span residues 1549 to 1585 (QEVAAAVIQRCYRKYKQLTWIALKYALYKKMTQAAIL), 1586 to 1608 (IQSKFRSYYEQKRFQQSRRAAVL), and 1609 to 1631 (IQNFYRSYKKCGRRRPARRTAVI).

The protein belongs to the CAMTA family. May interact with calmodulin.

The protein resides in the nucleus. Its subcellular location is the cytoplasm. Functionally, transcriptional activator. This Mus musculus (Mouse) protein is Calmodulin-binding transcription activator 1.